Here is a 457-residue protein sequence, read N- to C-terminus: Argininosuccinate lyase (457 aa).

It belongs to the lyase 1 family. Argininosuccinate lyase subfamily.

The protein resides in the cytoplasm. The enzyme catalyses 2-(N(omega)-L-arginino)succinate = fumarate + L-arginine. It functions in the pathway amino-acid biosynthesis; L-arginine biosynthesis; L-arginine from L-ornithine and carbamoyl phosphate: step 3/3. This chain is Argininosuccinate lyase, found in Shigella boydii serotype 18 (strain CDC 3083-94 / BS512).